We begin with the raw amino-acid sequence, 73 residues long: Translation initiation factor IF-1 (73 aa).

The S1-like domain occupies 1-72 (MAKEEAIEKD…SKGRIVYRYK (72 aa)).

Belongs to the IF-1 family. As to quaternary structure, component of the 30S ribosomal translation pre-initiation complex which assembles on the 30S ribosome in the order IF-2 and IF-3, IF-1 and N-formylmethionyl-tRNA(fMet); mRNA recruitment can occur at any time during PIC assembly.

It localises to the cytoplasm. Functionally, one of the essential components for the initiation of protein synthesis. Stabilizes the binding of IF-2 and IF-3 on the 30S subunit to which N-formylmethionyl-tRNA(fMet) subsequently binds. Helps modulate mRNA selection, yielding the 30S pre-initiation complex (PIC). Upon addition of the 50S ribosomal subunit IF-1, IF-2 and IF-3 are released leaving the mature 70S translation initiation complex. The protein is Translation initiation factor IF-1 of Salinibacter ruber (strain DSM 13855 / M31).